A 97-amino-acid polypeptide reads, in one-letter code: Cornifin (97 aa).

A disordered region spans residues 1 to 42 (MSSQQQKQPCTPPPQPQQQQVKQPCQPPPQEPCVPKTKEPCH). Ser-2 is subject to N-acetylserine. A run of 9 repeats spans residues 3 to 14 (SQQQKQPCTPPP), 18 to 29 (QQQVKQPCQPPP), 31 to 38 (EPCVPKTK), 39 to 46 (EPCHPKVP), 47 to 54 (EPCQPKVP), 55 to 62 (EPCQPKVP), 63 to 70 (EPCHPKVP), 71 to 78 (EPCQPKVP), and 79 to 85 (EPCPSPV). The interval 3–29 (SQQQKQPCTPPPQPQQQQVKQPCQPPP) is 2 X 12 AA approximate repeats. The tract at residues 31–85 (EPCVPKTKEPCHPKVPEPCQPKVPEPCQPKVPEPCHPKVPEPCQPKVPEPCPSPV) is 7 X 8 AA approximate tandem repeats.

Belongs to the cornifin (SPRR) family. Not detected in normal lung tissue but seen in tumor tissues. Cells around the keratin pearls contain high levels.

It localises to the cytoplasm. Functionally, cross-linked envelope protein of keratinocytes. It is a keratinocyte protein that first appears in the cell cytosol, but ultimately becomes cross-linked to membrane proteins by transglutaminase. All that results in the formation of an insoluble envelope beneath the plasma membrane. The chain is Cornifin (SPRP) from Sus scrofa (Pig).